We begin with the raw amino-acid sequence, 803 residues long: Lon protease (803 aa).

One can recognise a Lon N-terminal domain in the interval 9–202; sequence MPVLPLRDVV…YLLGMMESEA (194 aa). 356 to 363 contributes to the ATP binding site; the sequence is GPPGVGKT. The region spanning 592–773 is the Lon proteolytic domain; that stretch reads QNRIGEVTGL…DEVLGFALEN (182 aa). Active-site residues include Ser679 and Lys722.

This sequence belongs to the peptidase S16 family. Homohexamer. Organized in a ring with a central cavity.

Its subcellular location is the cytoplasm. The catalysed reaction is Hydrolysis of proteins in presence of ATP.. Its function is as follows. ATP-dependent serine protease that mediates the selective degradation of mutant and abnormal proteins as well as certain short-lived regulatory proteins. Required for cellular homeostasis and for survival from DNA damage and developmental changes induced by stress. Degrades polypeptides processively to yield small peptide fragments that are 5 to 10 amino acids long. Binds to DNA in a double-stranded, site-specific manner. This chain is Lon protease, found in Haemophilus influenzae (strain ATCC 51907 / DSM 11121 / KW20 / Rd).